Reading from the N-terminus, the 23-residue chain is Prolamin alpha-3 (23 aa).

This chain is Prolamin alpha-3, found in Dactylis glomerata (Orchard grass).